The chain runs to 133 residues: Sigma factor-binding protein Crl (133 aa).

The interval Thr99–Ser122 is essential for activity.

This sequence belongs to the Crl family.

Its subcellular location is the cytoplasm. Its function is as follows. Binds to the sigma-S subunit of RNA polymerase, activating expression of sigma-S-regulated genes. Stimulates RNA polymerase holoenzyme formation and may bind to several other sigma factors, such as sigma-70 and sigma-32. The sequence is that of Sigma factor-binding protein Crl from Photobacterium profundum (strain SS9).